Reading from the N-terminus, the 355-residue chain is tRNA-specific 2-thiouridylase MnmA (355 aa).

Residues glycine 7–serine 14 and leucine 33 contribute to the ATP site. The active-site Nucleophile is the cysteine 94. Cysteine 94 and cysteine 193 are oxidised to a cystine. An ATP-binding site is contributed by glycine 119. Residues lysine 143–glutamine 145 are interaction with tRNA. Cysteine 193 functions as the Cysteine persulfide intermediate in the catalytic mechanism. The interaction with tRNA stretch occupies residues arginine 298–tyrosine 299.

This sequence belongs to the MnmA/TRMU family.

It is found in the cytoplasm. It catalyses the reaction S-sulfanyl-L-cysteinyl-[protein] + uridine(34) in tRNA + AH2 + ATP = 2-thiouridine(34) in tRNA + L-cysteinyl-[protein] + A + AMP + diphosphate + H(+). Catalyzes the 2-thiolation of uridine at the wobble position (U34) of tRNA, leading to the formation of s(2)U34. The chain is tRNA-specific 2-thiouridylase MnmA from Acaryochloris marina (strain MBIC 11017).